A 251-amino-acid chain; its full sequence is 14-3-3-like protein (251 aa).

Belongs to the 14-3-3 family. In terms of tissue distribution, most abundant in roots and flowers.

This chain is 14-3-3-like protein, found in Nicotiana tabacum (Common tobacco).